The following is a 463-amino-acid chain: Elongation factor 1-alpha 2 (463 aa).

N,N,N-trimethylglycine is present on Gly-2. Residues 5-242 (KTHINIVVIG…DTILPPTRPT (238 aa)) enclose the tr-type G domain. The interval 14–21 (GHVDSGKS) is G1. Residues Asp-17, Ser-18, Gly-19, Lys-20, Ser-21, and Thr-22 each contribute to the GTP site. Asp-17 contributes to the Mg(2+) binding site. Lys-36 is modified (N6,N6,N6-trimethyllysine; alternate). Lys-36 is subject to N6,N6-dimethyllysine; alternate. Residue Lys-36 is modified to N6-methyllysine; alternate. At Lys-55 the chain carries N6,N6,N6-trimethyllysine. At Lys-55 the chain carries N6,N6-dimethyllysine. The tract at residues 70 to 74 (GITID) is G2. N6,N6,N6-trimethyllysine is present on Lys-79. Positions 91 to 94 (DAPG) are G3. The GTP site is built by Asn-153, Lys-154, and Asp-156. The G4 stretch occupies residues 153-156 (NKMD). Ser-163 is modified (phosphoserine). N6,N6-dimethyllysine; alternate is present on Lys-165. Lys-165 is modified (N6-methyllysine; alternate). Lys-165 is subject to N6,N6,N6-trimethyllysine; alternate; by EEF1AKMT3. Lys-179 is subject to N6-acetyllysine. Residues Ser-194, Gly-195, and Trp-196 each coordinate GTP. The segment at 194-196 (SGW) is G5. Ser-224 carries the post-translational modification Phosphoserine. Thr-239 is modified (phosphothreonine). 2 positions are modified to 5-glutamyl glycerylphosphorylethanolamine: Glu-301 and Glu-374. At Lys-439 the chain carries N6-acetyllysine. The tract at residues 444-463 (KSGGAGKVTKSAQKAQKAGK) is disordered.

This sequence belongs to the TRAFAC class translation factor GTPase superfamily. Classic translation factor GTPase family. EF-Tu/EF-1A subfamily. As to quaternary structure, homodimer; arranged in a 'head to tail' dimer configuration. Trimethylated at Lys-165 by EEF1AKMT3. Mono-, di-, and trimethylated at Lys-36 by EEF1AKMT4; trimethylated form is predominant. Methylation by EEF1AKMT4 contributes to the fine-tuning of translation rates for a subset of tRNAs. Trimethylated at the N-terminus and dimethylated at Lys-55 by METTL13.

It is found in the endoplasmic reticulum membrane. The catalysed reaction is GTP + H2O = GDP + phosphate + H(+). In terms of biological role, translation elongation factor that catalyzes the GTP-dependent binding of aminoacyl-tRNA (aa-tRNA) to the A-site of ribosomes during the elongation phase of protein synthesis. Base pairing between the mRNA codon and the aa-tRNA anticodon promotes GTP hydrolysis, releasing the aa-tRNA from EEF1A1 and allowing its accommodation into the ribosome. The growing protein chain is subsequently transferred from the P-site peptidyl tRNA to the A-site aa-tRNA, extending it by one amino acid through ribosome-catalyzed peptide bond formation. The protein is Elongation factor 1-alpha 2 (EEF1A2) of Bos taurus (Bovine).